Reading from the N-terminus, the 757-residue chain is Polyribonucleotide nucleotidyltransferase (757 aa).

Mg(2+) is bound by residues Asp525 and Asp531. The 60-residue stretch at 591–650 (PRVISVNIPVDKIGELIGPKGKTINAIQDETGADISIEEDGAVYIGAVDGPSAEAARAQV) folds into the KH domain. Residues 662 to 734 (GESFLGTVVK…DRGKLSLAPV (73 aa)) enclose the S1 motif domain. The disordered stretch occupies residues 736-757 (EEAADQEGSAAASDGPEAPAEG).

It belongs to the polyribonucleotide nucleotidyltransferase family. Requires Mg(2+) as cofactor.

Its subcellular location is the cytoplasm. The enzyme catalyses RNA(n+1) + phosphate = RNA(n) + a ribonucleoside 5'-diphosphate. Functionally, involved in mRNA degradation. Catalyzes the phosphorolysis of single-stranded polyribonucleotides processively in the 3'- to 5'-direction. The sequence is that of Polyribonucleotide nucleotidyltransferase from Clavibacter sepedonicus (Clavibacter michiganensis subsp. sepedonicus).